Consider the following 360-residue polypeptide: Phospho-N-acetylmuramoyl-pentapeptide-transferase (360 aa).

Transmembrane regions (helical) follow at residues 21 to 41, 73 to 93, 94 to 114, 132 to 152, 168 to 188, 199 to 219, 239 to 259, 263 to 283, 288 to 308, and 338 to 358; these read YITV…LWIG, TMGG…WANL, ANSY…IGFV, WKYF…YWLG, IMPQ…VGTG, GLAI…AWAT, VVVF…FNTY, VFMG…VAIL, FLLV…ILQV, and VIIR…VTLK.

Belongs to the glycosyltransferase 4 family. MraY subfamily. Mg(2+) is required as a cofactor.

It is found in the cell inner membrane. The enzyme catalyses UDP-N-acetyl-alpha-D-muramoyl-L-alanyl-gamma-D-glutamyl-meso-2,6-diaminopimeloyl-D-alanyl-D-alanine + di-trans,octa-cis-undecaprenyl phosphate = di-trans,octa-cis-undecaprenyl diphospho-N-acetyl-alpha-D-muramoyl-L-alanyl-D-glutamyl-meso-2,6-diaminopimeloyl-D-alanyl-D-alanine + UMP. Its pathway is cell wall biogenesis; peptidoglycan biosynthesis. Its function is as follows. Catalyzes the initial step of the lipid cycle reactions in the biosynthesis of the cell wall peptidoglycan: transfers peptidoglycan precursor phospho-MurNAc-pentapeptide from UDP-MurNAc-pentapeptide onto the lipid carrier undecaprenyl phosphate, yielding undecaprenyl-pyrophosphoryl-MurNAc-pentapeptide, known as lipid I. This Haemophilus influenzae (strain 86-028NP) protein is Phospho-N-acetylmuramoyl-pentapeptide-transferase.